Consider the following 499-residue polypeptide: Probable dipeptidase B (499 aa).

Cys26 is an active-site residue.

The protein belongs to the peptidase C69 family.

The catalysed reaction is an L-aminoacyl-L-amino acid + H2O = 2 an L-alpha-amino acid. This is Probable dipeptidase B (pepDB) from Streptococcus pyogenes serotype M3 (strain ATCC BAA-595 / MGAS315).